We begin with the raw amino-acid sequence, 130 residues long: Small ribosomal subunit protein uS8 (130 aa).

Belongs to the universal ribosomal protein uS8 family. In terms of assembly, part of the 30S ribosomal subunit.

Functionally, one of the primary rRNA binding proteins, it binds directly to 16S rRNA central domain where it helps coordinate assembly of the platform of the 30S subunit. The sequence is that of Small ribosomal subunit protein uS8 from Methanosphaerula palustris (strain ATCC BAA-1556 / DSM 19958 / E1-9c).